The chain runs to 162 residues: Probable cytosine deaminase (162 aa).

The CMP/dCMP-type deaminase domain maps to 8 to 132 (EKDLAYLREA…PLYINSRDIL (125 aa)). Residue H59 participates in Zn(2+) binding. E61 (proton donor) is an active-site residue. Zn(2+) is bound by residues C87 and C90. D159 lines the substrate pocket.

This sequence belongs to the cytidine and deoxycytidylate deaminase family. In terms of assembly, homodimer. It depends on Zn(2+) as a cofactor.

It localises to the cytoplasm. The protein resides in the nucleus. It catalyses the reaction cytosine + H2O + H(+) = uracil + NH4(+). It functions in the pathway pyrimidine metabolism; UMP biosynthesis via salvage pathway; uracil from cytosine: step 1/1. Functionally, catalyzes the hydrolytic deamination of cytosine to uracil or 5-methylcytosine to thymine. Is involved in the pyrimidine salvage pathway, which allows the cell to utilize cytosine for pyrimidine nucleotide synthesis. This Schizosaccharomyces pombe (strain 972 / ATCC 24843) (Fission yeast) protein is Probable cytosine deaminase.